Consider the following 376-residue polypeptide: Chaperone protein DnaJ (376 aa).

Residues 5 to 70 form the J domain; the sequence is DFYDVLGVSK…EKKQNYDNFG (66 aa). The CR-type zinc finger occupies 137-215; it reads GKKQDIKFST…CNGQGNKQAS (79 aa). Zn(2+) contacts are provided by C150, C153, C167, C170, C189, C192, C203, and C206. CXXCXGXG motif repeat units lie at residues 150–157, 167–174, 189–196, and 203–210; these read CNTCNGNG, CTVCGGNG, CPQCAGSG, and CTDCNGQG.

This sequence belongs to the DnaJ family. Homodimer. The cofactor is Zn(2+).

It is found in the cytoplasm. Participates actively in the response to hyperosmotic and heat shock by preventing the aggregation of stress-denatured proteins and by disaggregating proteins, also in an autonomous, DnaK-independent fashion. Unfolded proteins bind initially to DnaJ; upon interaction with the DnaJ-bound protein, DnaK hydrolyzes its bound ATP, resulting in the formation of a stable complex. GrpE releases ADP from DnaK; ATP binding to DnaK triggers the release of the substrate protein, thus completing the reaction cycle. Several rounds of ATP-dependent interactions between DnaJ, DnaK and GrpE are required for fully efficient folding. Also involved, together with DnaK and GrpE, in the DNA replication of plasmids through activation of initiation proteins. This Pelagibacter ubique (strain HTCC1062) protein is Chaperone protein DnaJ.